The chain runs to 75 residues: Putative sulfur carrier protein TsuB (75 aa).

Catalysis depends on C13, which acts as the Cysteine persulfide intermediate.

Belongs to the sulfur carrier protein TusA family.

Functionally, involved in thiosulfate metabolism. In Escherichia coli (strain K12), this protein is Putative sulfur carrier protein TsuB.